The chain runs to 47 residues: Putative protein PinH (47 aa).

The 47-residue stretch at 1-47 (MWHLVVLLEELCERGINFRALAQSIFAQQWGDECCKSKTICDLKVIV) folds into the Resolvase/invertase-type recombinase catalytic domain.

It belongs to the site-specific recombinase resolvase family.

The sequence is that of Putative protein PinH (pinH) from Escherichia coli (strain K12).